The following is a 167-amino-acid chain: MATKILIFLSFVALSSAGFVWVDDDNNSFPKLRQLYVPPLPQPPPLPNIPGLPQPPPLPQPPPLFGFDFSPILPIPPIPPIPPILPTPPFINIPAPEDIKNIKPKPGQFFNGISVKSRSGYALDKDGNRVKTGGTAVLINDNGEVNETIVGDNPPKFEESRKESSSN.

An N-terminal signal peptide occupies residues 1 to 17; that stretch reads MATKILIFLSFVALSSA. Residue Asn-26 is glycosylated (N-linked (GlcNAc...) asparagine). 5 tandem repeats follow at residues 38–46, 56–64, 76–78, 79–81, and 82–84. The interval 145–167 is disordered; it reads VNETIVGDNPPKFEESRKESSSN. N-linked (GlcNAc...) asparagine glycosylation is present at Asn-146. The segment covering 155–167 has biased composition (basic and acidic residues); that stretch reads PKFEESRKESSSN.

In terms of tissue distribution, produced by both the posterior (PSG) and middle (MSG) sections of silk glands.

The protein localises to the secreted. This chain is Seroin, found in Galleria mellonella (Greater wax moth).